A 457-amino-acid polypeptide reads, in one-letter code: Argininosuccinate lyase (457 aa).

The protein belongs to the lyase 1 family. Argininosuccinate lyase subfamily.

The protein resides in the cytoplasm. It carries out the reaction 2-(N(omega)-L-arginino)succinate = fumarate + L-arginine. Its pathway is amino-acid biosynthesis; L-arginine biosynthesis; L-arginine from L-ornithine and carbamoyl phosphate: step 3/3. This chain is Argininosuccinate lyase, found in Haemophilus influenzae (strain 86-028NP).